The following is a 417-amino-acid chain: Vacuolar cation/proton exchanger 3 (417 aa).

Over 1–45 (MENPQIEMGAFKANGPQLQNGGLRSSMVQSWNLQRFVESALRSIR) the chain is Cytoplasmic. A helical transmembrane segment spans residues 46 to 66 (IVIFTSKLNLLLPFGPASIIL). The Extracellular segment spans residues 67–73 (HYTTSRH). A helical transmembrane segment spans residues 74 to 94 (GLVFLFSMLGITPLAERLGYA). The Cytoplasmic segment spans residues 95-105 (TEQLAIYTGPT). Residues 106 to 126 (VGGLLNATFGNATEMIIAIYA) traverse the membrane as a helical segment. The cation selection stretch occupies residues 115-150 (GNATEMIIAIYALKNGMIRVVQQSLLGSILSNMLLV). Residues 127-140 (LKNGMIRVVQQSLL) lie on the Extracellular side of the membrane. A helical transmembrane segment spans residues 141–161 (GSILSNMLLVMGCAFFAGGIV). Over 162–173 (HRNKDQVFSKAT) the chain is Cytoplasmic. Residues 174 to 194 (AVVNSGLLLMAVMGLMFPAVL) form a helical membrane-spanning segment. The Extracellular portion of the chain corresponds to 195–207 (HFTHSEVRQGASE). The helical transmembrane segment at 208-230 (VSLSRFSSCIMLVAYASYLYFQL) threads the bilayer. Topologically, residues 231–258 (SGRNNAYSPIGSEEMPNEDAAEEDEESE) are cytoplasmic. A helical transmembrane segment spans residues 259–279 (IGMWESIAWLAMLTLWVSILS). The Extracellular portion of the chain corresponds to 280 to 291 (EYLVNAIEGASD). Residues 292-312 (SLNLPVAFISVILLPIVGNAA) form a helical membrane-spanning segment. The tract at residues 309 to 344 (GNAAEHASAIMFAMKDKLDITLGVAIGSSTQISMFV) is cation selection. The Cytoplasmic portion of the chain corresponds to 313–330 (EHASAIMFAMKDKLDITL). A helical transmembrane segment spans residues 331-351 (GVAIGSSTQISMFVIPFCVVI). Residues 352–360 (GWMMGQKMD) lie on the Extracellular side of the membrane. Residues 361-381 (LNFQLFETATLFITVLVVAFM) traverse the membrane as a helical segment. Residues 382-389 (LQDGVANY) are Cytoplasmic-facing. The helical transmembrane segment at 390–410 (LKGLMLILCYLIVAASFFVHV) threads the bilayer. Over 411–417 (DPQSSDD) the chain is Extracellular.

Belongs to the Ca(2+):cation antiporter (CaCA) (TC 2.A.19) family. Cation/proton exchanger (CAX) subfamily. Ubiquitous.

It localises to the vacuole membrane. Its function is as follows. Vacuolar cation/proton exchanger (CAX). Translocates Ca(2+) and other metal ions into vacuoles using the proton gradient formed by H(+)-ATPase and H(+)-pyrophosphatase. This chain is Vacuolar cation/proton exchanger 3 (CAX3), found in Oryza sativa subsp. japonica (Rice).